The primary structure comprises 61 residues: MECYRMSNIVTCQPWEKFCYKEVTMFFPNHPVHLSGCASECTETNSKFCCTTDKCNGAGSG.

4 disulfides stabilise this stretch: cysteine 3–cysteine 19, cysteine 12–cysteine 37, cysteine 41–cysteine 49, and cysteine 50–cysteine 55.

It belongs to the three-finger toxin family. Short-chain subfamily. As to expression, expressed by the venom gland.

It localises to the secreted. Its function is as follows. Shows no cytotoxicity and does not inhibit the binding of alpha-bungarotoxin to nicotinic acetylcholine receptors of muscle and alpha-7/CHRNA7 types. However, it potentiates the binding of alpha-bungarotoxin to the acetylcholine-binding protein from Lymnaea stagnalis. This chain is Nakoroxin, found in Naja kaouthia (Monocled cobra).